Consider the following 94-residue polypeptide: Small ribosomal subunit protein uS17 (94 aa).

Belongs to the universal ribosomal protein uS17 family. Part of the 30S ribosomal subunit.

Its function is as follows. One of the primary rRNA binding proteins, it binds specifically to the 5'-end of 16S ribosomal RNA. This Streptomyces griseus subsp. griseus (strain JCM 4626 / CBS 651.72 / NBRC 13350 / KCC S-0626 / ISP 5235) protein is Small ribosomal subunit protein uS17.